The sequence spans 110 residues: UPF0339 protein YegP (110 aa).

Repeat copies occupy residues 10–58 and 61–109.

The protein belongs to the UPF0339 family. Duplicated subfamily.

The chain is UPF0339 protein YegP (yegP) from Escherichia coli O157:H7.